Consider the following 235-residue polypeptide: NAD(P)H-hydrate epimerase (235 aa).

The region spanning 18-221 (AAKIDEQLFS…GLVEEHGLQM (204 aa)) is the YjeF N-terminal domain. 65-69 (NNGGD) is a binding site for (6S)-NADPHX. Residues Asn66 and Asp127 each coordinate K(+). (6S)-NADPHX contacts are provided by residues 131–137 (GFSFKPP) and Asp160. Ser163 provides a ligand contact to K(+).

The protein belongs to the NnrE/AIBP family. K(+) serves as cofactor.

The enzyme catalyses (6R)-NADHX = (6S)-NADHX. The catalysed reaction is (6R)-NADPHX = (6S)-NADPHX. In terms of biological role, catalyzes the epimerization of the S- and R-forms of NAD(P)HX, a damaged form of NAD(P)H that is a result of enzymatic or heat-dependent hydration. This is a prerequisite for the S-specific NAD(P)H-hydrate dehydratase to allow the repair of both epimers of NAD(P)HX. This Caenorhabditis briggsae protein is NAD(P)H-hydrate epimerase.